Consider the following 187-residue polypeptide: Shikimate kinase (187 aa).

14–19 (GSGKST) is a binding site for ATP. Serine 18 is a binding site for Mg(2+). Substrate-binding residues include aspartate 36, arginine 60, and glycine 82. Arginine 120 is an ATP binding site. Arginine 147 is a binding site for substrate.

Belongs to the shikimate kinase family. As to quaternary structure, monomer. Mg(2+) is required as a cofactor.

Its subcellular location is the cytoplasm. The catalysed reaction is shikimate + ATP = 3-phosphoshikimate + ADP + H(+). Its pathway is metabolic intermediate biosynthesis; chorismate biosynthesis; chorismate from D-erythrose 4-phosphate and phosphoenolpyruvate: step 5/7. Functionally, catalyzes the specific phosphorylation of the 3-hydroxyl group of shikimic acid using ATP as a cosubstrate. The protein is Shikimate kinase of Chlorobaculum parvum (strain DSM 263 / NCIMB 8327) (Chlorobium vibrioforme subsp. thiosulfatophilum).